The following is a 94-amino-acid chain: Small ribosomal subunit protein uS19 (94 aa).

This sequence belongs to the universal ribosomal protein uS19 family.

Protein S19 forms a complex with S13 that binds strongly to the 16S ribosomal RNA. The polypeptide is Small ribosomal subunit protein uS19 (Hamiltonella defensa subsp. Acyrthosiphon pisum (strain 5AT)).